A 437-amino-acid chain; its full sequence is La-related protein 7 homolog (437 aa).

Residues 38–145 form the HTH La-type RNA-binding domain; the sequence is SKSPSLTIPK…KRKKKFDNRT (108 aa). One can recognise a xRRM domain in the interval 279 to 397; sequence ELSQSCFLKI…QRSSIDEIKA (119 aa). Over residues 417 to 427 the composition is skewed to basic residues; it reads RRPVSKRKNKA. Positions 417-437 are disordered; it reads RRPVSKRKNKAINKMSTEVKK.

Belongs to the LARP7 family. In terms of assembly, component of the telomerase holoenzyme complex composed minimally of the catalytic subunit p123 and the telomerase RNA template component. Post-translationally, the mature form of the protein is a protein of 43 kDa, which is derived from a 51 kDa precursor by proteolytic cleavage.

It is found in the nucleus. It localises to the chromosome. The protein localises to the telomere. Functionally, RNA-binding protein required for assembly of the holoenzyme telomerase ribonucleoprotein (RNP) complex. Specifically binds telomerase RNA and promotes its assembly with catalytic subunit p123, thereby stimulating enzymatic activity and processivity of p123. Telomerase is a ribonucleoprotein enzyme essential that copies new telomeric repeats onto chromosome ends and functions to maintain cell division. The polypeptide is La-related protein 7 homolog (Euplotes aediculatus (Ciliate)).